The sequence spans 471 residues: Probable ribonuclease FAU-1 (471 aa).

Belongs to the FAU-1 family.

Its function is as follows. Probable RNase involved in rRNA stability through maturation and/or degradation of precursor rRNAs. Binds to RNA in loop regions with AU-rich sequences. This chain is Probable ribonuclease FAU-1, found in Caldivirga maquilingensis (strain ATCC 700844 / DSM 13496 / JCM 10307 / IC-167).